The primary structure comprises 720 residues: Catalase-peroxidase (720 aa).

The tryptophyl-tyrosyl-methioninium (Trp-Tyr) (with M-233) cross-link spans 82-207; the sequence is WHSAGTYRTF…LGNTVMGLIY (126 aa). The active-site Proton acceptor is the H83. A cross-link (tryptophyl-tyrosyl-methioninium (Tyr-Met) (with W-82)) is located at residues 207–233; sequence YVNPEGPNGEPDLEGSAKNIRESFGKM. Residue H248 participates in heme b binding.

It belongs to the peroxidase family. Peroxidase/catalase subfamily. In terms of assembly, homodimer or homotetramer. Requires heme b as cofactor. In terms of processing, formation of the three residue Trp-Tyr-Met cross-link is important for the catalase, but not the peroxidase activity of the enzyme.

The catalysed reaction is H2O2 + AH2 = A + 2 H2O. It carries out the reaction 2 H2O2 = O2 + 2 H2O. Its function is as follows. Bifunctional enzyme with both catalase and broad-spectrum peroxidase activity. The chain is Catalase-peroxidase from Halobacterium salinarum (strain ATCC 29341 / DSM 671 / R1).